Consider the following 907-residue polypeptide: MFGKLLTKVFGSRNDRTLKAFGKVVNKINGFEEEYGQLSDEELKAKTKVFRERLEAGETLDDVLPEAFATVREASKRVFEMRHFDVQLIGGMILDSNRIAEMRTGEGKTLTATLPAYLNGLTGKGVHVITVNDYLAGRDAENNRPLFEFLGLSVGINVAGLGQVEKKAAYDADITYGTNNEFGFDYLRDNMAFSPAERVQRPLHYALIDEVDSILIDEARTPLIISGAAEDSSELYTKINTLIPNLIQQEKEDTEEEIGEGDYSIDEKAKQVHMTERGQEKVEVLLTERGMLAEGDSLYSAANISLLHHVNAALRAHTLFEKDVDYIVQDNEVIIVDEHTGRTMPGRRWSEGLHQAVEAKEGVHIQNENQTLASITFQNFFRQYEKLAGMTGTADTEAFEFQHIYGLDTVVVPTNRPMVRQDNPDLVYLTAEEKYAAIVKDIVGCRERGQPVLVGTVSIEQSELLHSLLKKEKIPHEILNAKFHEREADIVAQAGRTGAVTVATNMAGRGTDIVLGGNWNMEIEALANPTDEQRAKIKADWQIRHDEVVDAGGLHILGTERHESRRIDNQLRGRSGRQGDAGSSRFYLSMEDSLMRIFASDRVSSMMKKLGMEEGEAIEHPWVSRAIENAQRKVEARNFDIRKQLLEFDDVANDQRQVVYAQRNELMDAESIKDTITNIQTDVINELMDQYIPPQSVEELWDVAGLEQRLQQEYTMVLPIQEWLDKEDDLHEETLRERIVDTWINAYKAKEEMVGEQVLRQFEKAVMLQTLDGLWKEHLSAMDHLRQGIHLRGYAQKNPKQEYKRESFELFQQMLESLKHDVISILSKVQVQAQSDVEEMEERRRQEDAKIRRDYQHAAAEAIVGAEESAALAATQPQVREGEKVGRNDPCPCGSGKKYKQCHGKLS.

Residues Gln87, 105–109 (GEGKT), and Asp512 contribute to the ATP site. Residues 870 to 897 (AALAATQPQVREGEKVGRNDPCPCGSGK) are disordered. Zn(2+) contacts are provided by Cys891, Cys893, Cys902, and His903.

The protein belongs to the SecA family. Monomer and homodimer. Part of the essential Sec protein translocation apparatus which comprises SecA, SecYEG and auxiliary proteins SecDF-YajC and YidC. Requires Zn(2+) as cofactor.

It localises to the cell inner membrane. Its subcellular location is the cytoplasm. The catalysed reaction is ATP + H2O + cellular proteinSide 1 = ADP + phosphate + cellular proteinSide 2.. Its function is as follows. Part of the Sec protein translocase complex. Interacts with the SecYEG preprotein conducting channel. Has a central role in coupling the hydrolysis of ATP to the transfer of proteins into and across the cell membrane, serving both as a receptor for the preprotein-SecB complex and as an ATP-driven molecular motor driving the stepwise translocation of polypeptide chains across the membrane. This Shewanella piezotolerans (strain WP3 / JCM 13877) protein is Protein translocase subunit SecA.